A 127-amino-acid chain; its full sequence is SH2 domain-containing protein 1A (127 aa).

The SH2 domain maps to 6–102 (VYHGKISRET…GIVIPLQYPV (97 aa)). The interval 67 to 92 (ETAPGVHKRYFRKIKNLISAFQKPDQ) is interaction with FYN SH3 domain. Lys89 carries the post-translational modification N6-acetyllysine. Residues 104-127 (KSSPRSTQGTTGIREDPDVCLKAP) are disordered. Positions 116 to 127 (IREDPDVCLKAP) are enriched in basic and acidic residues.

In terms of assembly, interacts with CD84, CD244, LY9, SLAMF1 and FYN. Interacts with NTRK1, NTRK2 and NTRK3.

Its subcellular location is the cytoplasm. Functionally, cytoplasmic adapter regulating receptors of the signaling lymphocytic activation molecule (SLAM) family such as SLAMF1, CD244, LY9, CD84, SLAMF6 and SLAMF7. In SLAM signaling seems to cooperate with SH2D1B/EAT-2. Initially it has been proposed that association with SLAMF1 prevents SLAMF1 binding to inhibitory effectors including INPP5D/SHIP1 and PTPN11/SHP-2. However, by simultaneous interactions, recruits FYN which subsequently phosphorylates and activates SLAMF1. Positively regulates CD244/2B4- and CD84-mediated natural killer (NK) cell functions. Can also promote CD48-, SLAMF6 -, LY9-, and SLAMF7-mediated NK cell activation. In the context of NK cell-mediated cytotoxicity enhances conjugate formation with target cells. May also regulate the activity of the neurotrophin receptors NTRK1, NTRK2 and NTRK3. In Saguinus oedipus (Cotton-top tamarin), this protein is SH2 domain-containing protein 1A (SH2D1A).